The following is a 367-amino-acid chain: Queuine tRNA-ribosyltransferase (367 aa).

Residue Asp-91 is the Proton acceptor of the active site. Substrate contacts are provided by residues 91 to 95 (DSGGF), Asp-145, Gln-188, and Gly-215. The active-site Nucleophile is the Asp-265. Residues 270–274 (TRVAR) form an RNA binding; important for wobble base 34 recognition region. Cys-303, Cys-305, Cys-308, and His-334 together coordinate Zn(2+).

It belongs to the queuine tRNA-ribosyltransferase family. Homodimer. Within each dimer, one monomer is responsible for RNA recognition and catalysis, while the other monomer binds to the replacement base PreQ1. Zn(2+) serves as cofactor.

The enzyme catalyses 7-aminomethyl-7-carbaguanine + guanosine(34) in tRNA = 7-aminomethyl-7-carbaguanosine(34) in tRNA + guanine. It participates in tRNA modification; tRNA-queuosine biosynthesis. Catalyzes the base-exchange of a guanine (G) residue with the queuine precursor 7-aminomethyl-7-deazaguanine (PreQ1) at position 34 (anticodon wobble position) in tRNAs with GU(N) anticodons (tRNA-Asp, -Asn, -His and -Tyr). Catalysis occurs through a double-displacement mechanism. The nucleophile active site attacks the C1' of nucleotide 34 to detach the guanine base from the RNA, forming a covalent enzyme-RNA intermediate. The proton acceptor active site deprotonates the incoming PreQ1, allowing a nucleophilic attack on the C1' of the ribose to form the product. After dissociation, two additional enzymatic reactions on the tRNA convert PreQ1 to queuine (Q), resulting in the hypermodified nucleoside queuosine (7-(((4,5-cis-dihydroxy-2-cyclopenten-1-yl)amino)methyl)-7-deazaguanosine). The polypeptide is Queuine tRNA-ribosyltransferase (Thermosipho africanus (strain TCF52B)).